The chain runs to 449 residues: Glutamate--tRNA ligase (449 aa).

Residues 10 to 20 (PSPTGFLHIGN) carry the 'HIGH' region motif. Positions 214-218 (KLSKR) match the 'KMSKS' region motif. Lys217 contacts ATP.

The protein belongs to the class-I aminoacyl-tRNA synthetase family. Glutamate--tRNA ligase type 1 subfamily. As to quaternary structure, monomer.

The protein resides in the cytoplasm. The enzyme catalyses tRNA(Glu) + L-glutamate + ATP = L-glutamyl-tRNA(Glu) + AMP + diphosphate. Its function is as follows. Catalyzes the attachment of glutamate to tRNA(Glu) in a two-step reaction: glutamate is first activated by ATP to form Glu-AMP and then transferred to the acceptor end of tRNA(Glu). This Onion yellows phytoplasma (strain OY-M) protein is Glutamate--tRNA ligase.